A 603-amino-acid chain; its full sequence is Probable methyltransferase PMT20 (603 aa).

Residues 1–16 (MKSGKQSSQPEKGTSR) lie on the Cytoplasmic side of the membrane. A helical; Signal-anchor for type II membrane protein transmembrane segment spans residues 17–37 (ILSLTVLFIAFCGFSFYLGGI). The Lumenal segment spans residues 38-603 (FCSERDKIVA…KLWFSSNQTS (566 aa)). N-linked (GlcNAc...) asparagine glycosylation is found at Asn313 and Asn600.

The protein belongs to the methyltransferase superfamily.

The protein localises to the golgi apparatus membrane. The polypeptide is Probable methyltransferase PMT20 (Arabidopsis thaliana (Mouse-ear cress)).